Consider the following 469-residue polypeptide: Mitochondrial adenyl nucleotide antiporter SLC25A25 (469 aa).

The segment at 1-165 (MLCLCLYVPI…LYWKHSTIFD (165 aa)) is regulatory N-terminal domain. The Mitochondrial intermembrane segment spans residues 1–189 (MLCLCLYVPI…ERQTGMWWRH (189 aa)). EF-hand domains follow at residues 47–80 (TYRQ…QDHE), 78–113 (DHEK…LGVK), and 114–149 (ISEQ…HPVE). Positions 60, 62, 64, 66, and 71 each coordinate Ca(2+). Residues 151–160 (IPEIILYWKH) form a linker region region. Residues 166-469 (VGENLTVPDE…LKITLGVQSR (304 aa)) form a C-terminal transmembrane transporter domain region. 3 Solcar repeats span residues 184-270 (GMWW…MKRL), 278-363 (LRIH…LKNT), and 375-463 (PGVF…LKIT). Residues 190–207 (LVAGGGAGAVSRTCTAPL) traverse the membrane as a helical segment. At 208 to 244 (DRLKVLMQVHASRSNNMCIIGGFTQMIREGGAKSLWR) the chain is on the mitochondrial matrix side. Residues 245–264 (GNGINVLKIAPESAIKFMAY) form a helical membrane-spanning segment. Residues 265 to 287 (EQMKRLVGSDQETLRIHERLVAG) are Mitochondrial intermembrane-facing. A helical transmembrane segment spans residues 288-301 (SLAGAIAQSSIYPM). The Mitochondrial matrix segment spans residues 302–337 (EVLKTRMALRKTGQYSGMLDCAKRILAKEGVAAFYK). A helical membrane pass occupies residues 338–357 (GYIPNMLGIIPYAGIDLAVY). The Mitochondrial intermembrane portion of the chain corresponds to 358 to 380 (ETLKNTWLQRYAVNSADPGVFVL). The chain crosses the membrane as a helical span at residues 381-398 (LACGTISSTCGQLASYPL). Topologically, residues 399 to 437 (ALVRTRMQAQASIEGAPEVTMSSLFKQILRTEGAFGLYR) are mitochondrial matrix. A helical membrane pass occupies residues 438-457 (GLAPNFMKVIPAVSISYVVY). Residues 458–469 (ENLKITLGVQSR) lie on the Mitochondrial intermembrane side of the membrane.

It belongs to the mitochondrial carrier (TC 2.A.29) family. As to expression, mainly present in the liver and the skeletal muscle (at protein level).

It localises to the mitochondrion inner membrane. The catalysed reaction is Mg(2+)(out) + phosphate(in) + ATP(out) = Mg(2+)(in) + phosphate(out) + ATP(in). Its activity is regulated as follows. Activated by an increase in cytosolic calcium levels that induce a conformational change of the N-terminal regulatory domain, uncapping the channel and allowing transport. Electroneutral antiporter that most probably mediates the transport of adenyl nucleotides through the inner mitochondrial membrane. Originally identified as an ATP-magnesium/inorganic phosphate antiporter, it could have a broader specificity for adenyl nucleotides. By regulating the mitochondrial matrix adenyl nucleotide pool could adapt to changing cellular energetic demands and indirectly regulate adenyl nucleotide-dependent metabolic pathways. This Rattus norvegicus (Rat) protein is Mitochondrial adenyl nucleotide antiporter SLC25A25.